A 226-amino-acid polypeptide reads, in one-letter code: MPEDSNKASNTARVVFYTSILTGGILSSFYVYSRYFRRFTCTAEVPKKIYRGRTLFGRVTSVGDGDNFHFYHTPGGRLAGWGWLRPYPETNKRGLGKETLHIRLYGVDAPERPHFGRQGQPYGDEALEWLRSYILGRNVRVKLFSPDQYGRIVGGAKVWKLTGRKDVSTEMLKNGWGVKYEGKMGAEFNGKGKLFQKLEDHARKKKIGMFQQKGKIVTPGQYKKDE.

Residues 15 to 32 (VFYTSILTGGILSSFYVY) form a helical membrane-spanning segment. In terms of domain architecture, TNase-like spans 53 to 212 (RTLFGRVTSV…RKKKIGMFQQ (160 aa)). Residue Arg-103 is part of the active site. Asp-108 contacts Ca(2+). Active-site residues include Glu-111 and Arg-151.

It belongs to the LCL3 family.

The protein localises to the mitochondrion. The protein resides in the membrane. This is Probable endonuclease LCL3 (LCL3) from Yarrowia lipolytica (strain CLIB 122 / E 150) (Yeast).